The chain runs to 274 residues: NAD kinase (274 aa).

Residue D59 is the Proton acceptor of the active site. Residues 59 to 60 (DG), 133 to 134 (ND), R144, D163, 174 to 179 (TAYALS), and Q233 each bind NAD(+).

The protein belongs to the NAD kinase family. It depends on a divalent metal cation as a cofactor.

The protein resides in the cytoplasm. It catalyses the reaction NAD(+) + ATP = ADP + NADP(+) + H(+). Functionally, involved in the regulation of the intracellular balance of NAD and NADP, and is a key enzyme in the biosynthesis of NADP. Catalyzes specifically the phosphorylation on 2'-hydroxyl of the adenosine moiety of NAD to yield NADP. This is NAD kinase from Aquifex aeolicus (strain VF5).